A 207-amino-acid chain; its full sequence is Small ribosomal subunit protein uS4 (207 aa).

Positions 96-156 (SRLDNVVYRM…KKSHNQSRIY (61 aa)) constitute an S4 RNA-binding domain.

It belongs to the universal ribosomal protein uS4 family. Part of the 30S ribosomal subunit. Contacts protein S5. The interaction surface between S4 and S5 is involved in control of translational fidelity.

In terms of biological role, one of the primary rRNA binding proteins, it binds directly to 16S rRNA where it nucleates assembly of the body of the 30S subunit. Its function is as follows. With S5 and S12 plays an important role in translational accuracy. The chain is Small ribosomal subunit protein uS4 from Blochmanniella floridana.